Here is a 250-residue protein sequence, read N- to C-terminus: 2,3-bisphosphoglycerate-dependent phosphoglycerate mutase (250 aa).

Residues 10–17 (RHGESQWN), 23–24 (TG), Arg62, 89–92 (ERHY), Lys100, 116–117 (RR), and 185–186 (GN) contribute to the substrate site. The Tele-phosphohistidine intermediate role is filled by His11. Glu89 acts as the Proton donor/acceptor in catalysis.

The protein belongs to the phosphoglycerate mutase family. BPG-dependent PGAM subfamily. Homodimer.

The catalysed reaction is (2R)-2-phosphoglycerate = (2R)-3-phosphoglycerate. It functions in the pathway carbohydrate degradation; glycolysis; pyruvate from D-glyceraldehyde 3-phosphate: step 3/5. In terms of biological role, catalyzes the interconversion of 2-phosphoglycerate and 3-phosphoglycerate. The chain is 2,3-bisphosphoglycerate-dependent phosphoglycerate mutase from Salmonella dublin (strain CT_02021853).